Reading from the N-terminus, the 397-residue chain is GTPase Obg (397 aa).

One can recognise an Obg domain in the interval 1-159; the sequence is MKFVDEAEIR…RMLKLELMLL (159 aa). The disordered stretch occupies residues 22-44; the sequence is SFRREKYVPDGGPDGGDGGDGGS. Residues 33–43 show a composition bias toward gly residues; sequence GPDGGDGGDGG. The OBG-type G domain maps to 160 to 333; sequence ADVGLLGMPN…LCIKVMDFIE (174 aa). Residues 166–173, 191–195, 213–216, 283–286, and 314–316 each bind GTP; these read GMPNAGKS, FTTLV, DIPG, NKVD, and SAV. 2 residues coordinate Mg(2+): S173 and T193. The interval 359-389 is disordered; it reads TVENYEDDDDFDDDDDDDFDGDDDDDFDGDD. A compositionally biased stretch (acidic residues) spans 361–389; that stretch reads ENYEDDDDFDDDDDDDFDGDDDDDFDGDD.

Belongs to the TRAFAC class OBG-HflX-like GTPase superfamily. OBG GTPase family. As to quaternary structure, monomer. Requires Mg(2+) as cofactor.

Its subcellular location is the cytoplasm. Functionally, an essential GTPase which binds GTP, GDP and possibly (p)ppGpp with moderate affinity, with high nucleotide exchange rates and a fairly low GTP hydrolysis rate. Plays a role in control of the cell cycle, stress response, ribosome biogenesis and in those bacteria that undergo differentiation, in morphogenesis control. The protein is GTPase Obg of Pseudoalteromonas atlantica (strain T6c / ATCC BAA-1087).